Here is a 291-residue protein sequence, read N- to C-terminus: Methionine aminopeptidase (291 aa).

Position 65 (histidine 65) interacts with substrate. A divalent metal cation is bound by residues aspartate 85, aspartate 96, and histidine 155. Substrate is bound at residue histidine 163. A divalent metal cation-binding residues include glutamate 188 and glutamate 276.

It belongs to the peptidase M24A family. Methionine aminopeptidase archaeal type 2 subfamily. Monomer. It depends on Co(2+) as a cofactor. Zn(2+) serves as cofactor. The cofactor is Mn(2+). Fe(2+) is required as a cofactor.

It catalyses the reaction Release of N-terminal amino acids, preferentially methionine, from peptides and arylamides.. Functionally, removes the N-terminal methionine from nascent proteins. The N-terminal methionine is often cleaved when the second residue in the primary sequence is small and uncharged (Met-Ala-, Cys, Gly, Pro, Ser, Thr, or Val). The sequence is that of Methionine aminopeptidase from Archaeoglobus fulgidus (strain ATCC 49558 / DSM 4304 / JCM 9628 / NBRC 100126 / VC-16).